Consider the following 145-residue polypeptide: Aegerolysin Aa-Pri1 (145 aa).

A propeptide spanning residues 1–8 (MDSNKDER) is cleaved from the precursor.

The protein belongs to the aegerolysin family.

In Cyclocybe aegerita (Black poplar mushroom), this protein is Aegerolysin Aa-Pri1 (AA-PRI1).